A 301-amino-acid polypeptide reads, in one-letter code: 5'-3' exonuclease (301 aa).

The region spanning 182-264 is the 5'-3' exonuclease domain; it reads GYADLALLRG…RVAADVPLPD (83 aa).

Functionally, 5'-3' exonuclease acting preferentially on double-stranded DNA. The protein is 5'-3' exonuclease of Streptomyces coelicolor (strain ATCC BAA-471 / A3(2) / M145).